Here is a 460-residue protein sequence, read N- to C-terminus: NADH-ubiquinone oxidoreductase chain 4 (460 aa).

A run of 13 helical transmembrane segments spans residues 20–42 (SKWL…LTWL), 61–81 (PLST…ILAS), 94–113 (RMYI…AFGA), 114–134 (TKII…LIII), 148–168 (TYFL…LLLL), 195–215 (IWWA…GMHL), 225–245 (PVAG…YGMM), 258–278 (LAYP…LVCL), 285–304 (SLIA…GILI), 308–330 (WGFT…LFCL), 351–371 (MVLP…LALP), 380–400 (LMII…TGMG), and 436–456 (LLMT…ELMW).

This sequence belongs to the complex I subunit 4 family. As to quaternary structure, core subunit of respiratory chain NADH dehydrogenase (Complex I) which is composed of 45 different subunits.

It is found in the mitochondrion inner membrane. The catalysed reaction is a ubiquinone + NADH + 5 H(+)(in) = a ubiquinol + NAD(+) + 4 H(+)(out). Core subunit of the mitochondrial membrane respiratory chain NADH dehydrogenase (Complex I) which catalyzes electron transfer from NADH through the respiratory chain, using ubiquinone as an electron acceptor. Essential for the catalytic activity and assembly of complex I. This Danio rerio (Zebrafish) protein is NADH-ubiquinone oxidoreductase chain 4 (mt-nd4).